The following is a 794-amino-acid chain: Protein smoothened (794 aa).

The N-terminal stretch at 1–15 (GPCWLWALALGLALG) is a signal peptide. Topologically, residues 16–201 (PRRCPAAPLN…FTETEHREMH (186 aa)) are extracellular. Asn-25 is a glycosylation site (N-linked (GlcNAc...) asparagine). Cystine bridges form between Cys-34–Cys-148, Cys-40–Cys-104, Cys-48–Cys-97, Cys-88–Cys-124, and Cys-117–Cys-139. Positions 35–151 (RRPAACERLR…DRFPEGCPNE (117 aa)) constitute an FZ domain. Asp-65 is a binding site for cholesterol. A glycan (N-linked (GlcNAc...) asparagine) is linked at Asn-158. Disulfide bonds link Cys-163-Cys-183 and Cys-187-Cys-264. The helical transmembrane segment at 202–222 (VYIAFSSVTISCTFFTLATFV) threads the bilayer. Topologically, residues 223–231 (ADWRNSNRY) are cytoplasmic. Residues 232-252 (PAVILFYVNACFFVGSIGCVA) form a helical membrane-spanning segment. Residues 253-283 (QFMDGARDEIVCRADGTMRLGEPTSNETLSC) are Extracellular-facing. N-linked (GlcNAc...) asparagine glycosylation occurs at Asn-278. Cys-283 and Cys-359 are oxidised to a cystine. The chain crosses the membrane as a helical span at residues 284–304 (VIIFVIVYYSLMSGVIWFVML). The Cytoplasmic portion of the chain corresponds to 305–327 (TYAWHTSFKALGTTYQPLLGKTS). The helical transmembrane segment at 328-348 (YFHLITWSIPFVLTVAILAVA) threads the bilayer. Over 349–371 (QVDGDSVSGICFVGYKNYRYRAG) the chain is Extracellular. Residue Tyr-363 participates in cholesterol binding. Residues 372–392 (FVLAPIGLVLIVGGYFLIRGV) traverse the membrane as a helical segment. Residues 393-420 (MTLFSIKSNHPGLLSEKAASKINETMLR) lie on the Cytoplasmic side of the membrane. The chain crosses the membrane as a helical span at residues 421–440 (LGIFGFLAFGFVFITFGCHF). Topologically, residues 441-493 (YDFFNQAEWERSFREYVLCEANVTIATQTNKPIPECEIKNRPSLLVEKINLFA) are extracellular. Cys-459 and Cys-476 are disulfide-bonded. Asn-462 carries an N-linked (GlcNAc...) asparagine glycan. A helical membrane pass occupies residues 494-514 (MFGTGISMSTWVWTKATLLIW). The Cytoplasmic portion of the chain corresponds to 515-794 (KRTWCRLTGQ…AELLDADLDF (280 aa)). Disordered regions lie at residues 634–655 (LQKR…CPER) and 723–773 (PFCP…RAGL). Over residues 637–647 (RSRKKKRRKKK) the composition is skewed to basic residues.

This sequence belongs to the G-protein coupled receptor Fz/Smo family. As to quaternary structure, homodimer.

It is found in the cell membrane. It localises to the cell projection. Its subcellular location is the cilium. In terms of biological role, g protein-coupled receptor which associates with the patched protein (PTCH) to transduce hedgehog protein signaling. Binding of sonic hedgehog (SHH) to its receptor patched prevents inhibition of smoothened (SMO) by patched. When active, SMO binds to and sequesters protein kinase A catalytic subunit PRKACA at the cell membrane, preventing PRKACA-mediated phosphorylation of GLI transcription factors which releases the GLI proteins from PRKACA-mediated inhibition and allows for transcriptional activation of hedgehog pathway target genes. The polypeptide is Protein smoothened (SMO) (Gallus gallus (Chicken)).